The primary structure comprises 410 residues: Transcription factor Dp-1 (410 aa).

Residue Lys-3 is modified to N6-acetyllysine. Position 23 is a phosphoserine; by CDK2 (Ser-23). The tract at residues 77-114 (VVGSPHTPNTHFVSQNQPSDPSPWSAGKRNRKGEKNGK) is disordered. The span at 82–95 (HTPNTHFVSQNQPS) shows a compositional bias: polar residues. The segment covering 104–114 (KRNRKGEKNGK) has biased composition (basic residues). The interval 105–127 (RNRKGEKNGKGLRHFSMKVCEKV) is interaction with CEBPA. The DNA-binding element occupies 113–195 (GKGLRHFSMK…KKEIKWIGLP (83 aa)). The short motif at 161–195 (DQKNIRRRVYDALNVLMAMNIISKEKKEIKWIGLP) is the DEF box element. A dimerization region spans residues 204–277 (SLEVERQRRL…KKTVIDCSIS (74 aa)). An enhances binding of RB protein to E2F region spans residues 211–327 (RRLERIKQKQ…DLRVARSLVP (117 aa)). The interval 214–246 (ERIKQKQSQLQELILQQIAFKNLVQRNRQVEQQ) is DCB1. The tract at residues 259-315 (LPFIIVNTSKKTVIDCSISNDKFEYLFNFDNTFEIHDDIEVLKRMGMACGLESGSCS) is DCB2. The disordered stretch occupies residues 370–410 (GALATSSSGSQYSGSRVETPVSCVGEDDEDDEDFNENEEED). Positions 375–384 (SSSGSQYSGS) are enriched in low complexity. The segment covering 394–410 (GEDDEDDEDFNENEEED) has biased composition (acidic residues).

Belongs to the E2F/DP family. As to quaternary structure, component of the E2F:DP transcription factor complex. Forms heterodimers with E2F family members. The complex can interact with hypophosphorylated retinoblastoma protein RB1 and related proteins (RBL1 and RBL2) that inhibit the E2F transactivation domain. This repression involves recruitment of histone deacetylase (HDAC). During the cell cycle, from mid-to-late G1 phase, RB family members become phosphorylated, detach from the DRTF1/E2F complex to render E2F transcriptionally active. Part of the E2F6.com-1 complex in G0 phase is composed of E2F6, MGA, MAX, TFDP1, CBX3, BAT8, EUHMTASE1, RING1, RNF2, MBLR, L3MBTL2 YAF2. Component of the DREAM complex (also named LINC complex) at least composed of E2F4, E2F5, LIN9, LIN37, LIN52, LIN54, MYBL1, MYBL2, RBL1, RBL2, RBBP4, TFDP1 and TFDP2. The complex exists in quiescent cells where it represses cell cycle-dependent genes. It dissociates in S phase when LIN9, LIN37, LIN52 and LIN54 form a subcomplex that binds to MYBL2. The complex TFDP1:E2F1 interacts with CEBPA; the interaction prevents CEBPA binding to target gene promoters and represses its transcriptional activity. Ubiquitinated by the BCR(KBTBD5) complex, leading to its subsequent degradation. In terms of processing, phosphorylation by E2F1-bound cyclin A-CDK2, in the S phase, inhibits E2F-mediated DNA binding and transactivation.

It is found in the nucleus. The protein resides in the cytoplasm. In terms of biological role, can stimulate E2F-dependent transcription. Binds DNA cooperatively with E2F family members through the E2 recognition site, 5'-TTTC[CG]CGC-3', found in the promoter region of a number of genes whose products are involved in cell cycle regulation or in DNA replication. The E2F1:DP complex appears to mediate both cell proliferation and apoptosis. Blocks adipocyte differentiation by repressing CEBPA binding to its target gene promoters. This chain is Transcription factor Dp-1 (TFDP1), found in Bos taurus (Bovine).